Consider the following 339-residue polypeptide: Erlin-2 (339 aa).

Over 1–3 (MAQ) the chain is Cytoplasmic. The helical transmembrane segment at 4–24 (LGAVVAVASSFFCASLFSAVH) threads the bilayer. Topologically, residues 25–339 (KIEEGHIGVY…EPLETATKEN (315 aa)) are lumenal. Asn-106 carries an N-linked (GlcNAc...) asparagine glycan. The tract at residues 177–309 (EAIRRNYELM…DIPNMFMDSA (133 aa)) is interaction with ERLIN1. Lys-267 is modified (N6-acetyllysine).

This sequence belongs to the band 7/mec-2 family. As to quaternary structure, forms a heteromeric complex with ERLIN1. In complex with ERLIN1, interacts with RNF170. Interacts with activated ITPR1, independently of the degree of ITPR1 polyubiquitination. Interacts with SCAP, INSIG1, SREBF1 and SREBF2 under cholesterol sufficiency conditions; indicative for an association with the SCAP-SREBP-INSIG complex. Probably part of an AMFR/gp78 and INSIG1-containing ubiquitin ligase complex involved in ERAD of HMGCR. Interacts with TMUB1; TMUB1 bridges the association with AMFR. Interacts with SYVN1 and RNF139. Interacts with TMEM259. Interacts with TMEM41B. Deubiquitinated by USP25; leading to stabilization. Ubiquitous.

It localises to the endoplasmic reticulum membrane. Component of the ERLIN1/ERLIN2 complex which mediates the endoplasmic reticulum-associated degradation (ERAD) of inositol 1,4,5-trisphosphate receptors (IP3Rs) such as ITPR1. Promotes sterol-accelerated ERAD of HMGCR probably implicating an AMFR/gp78-containing ubiquitin ligase complex. Involved in regulation of cellular cholesterol homeostasis by regulation the SREBP signaling pathway. May promote ER retention of the SCAP-SREBF complex. The polypeptide is Erlin-2 (ERLIN2) (Homo sapiens (Human)).